The primary structure comprises 739 residues: MICOS complex subunit Mic60 (739 aa).

The interval 23-63 is disordered; that stretch reads ANNRQFGGSSSGSGGREQGRRQQEEQGQQGDQGYQGYQSLP. Over residues 47–61 the composition is skewed to low complexity; the sequence is EQGQQGDQGYQGYQS. Residues 69 to 89 traverse the membrane as a helical segment; sequence AGFGKVVLFVSPLAAVGGVIT. The segment at 154 to 219 is disordered; it reads VTGLFGGGSG…PAAKPKDNPL (66 aa). Residues 163-198 are compositionally biased toward basic and acidic residues; the sequence is GDDKSKKSKVEPVKATPAEEKRPSKPSEVSKTEAKP. Positions 199–212 are enriched in low complexity; it reads VSKPAAAAAPAPAA. The stretch at 283-339 forms a coiled coil; sequence TAVATAERAAREAQEKIVACEIALSAAATAQNAKKVEAVRDKIKKLVDHIGNVKDEL.

It belongs to the MICOS complex subunit Mic60 family. In terms of assembly, component of the mitochondrial contact site and cristae organizing system (MICOS) complex. Interacts with the mitochondria-shaping protein Opa1.

It localises to the mitochondrion inner membrane. Functionally, component of the MICOS complex, a large protein complex of the mitochondrial inner membrane that plays crucial roles in the maintenance of crista junctions, inner membrane architecture, and formation of contact sites to the outer membrane. The polypeptide is MICOS complex subunit Mic60 (Drosophila melanogaster (Fruit fly)).